The chain runs to 283 residues: Pantothenate synthetase (283 aa).

ATP is bound at residue 30–37 (MGYLHDGH). The active-site Proton donor is H37. Q61 is a binding site for (R)-pantoate. Q61 contacts beta-alanine. 148–151 (GQKD) lines the ATP pocket. Q154 contacts (R)-pantoate. Position 185 to 188 (185 to 188 (MSSR)) interacts with ATP.

The protein belongs to the pantothenate synthetase family. Homodimer.

The protein localises to the cytoplasm. The catalysed reaction is (R)-pantoate + beta-alanine + ATP = (R)-pantothenate + AMP + diphosphate + H(+). It participates in cofactor biosynthesis; (R)-pantothenate biosynthesis; (R)-pantothenate from (R)-pantoate and beta-alanine: step 1/1. In terms of biological role, catalyzes the condensation of pantoate with beta-alanine in an ATP-dependent reaction via a pantoyl-adenylate intermediate. The polypeptide is Pantothenate synthetase (Carboxydothermus hydrogenoformans (strain ATCC BAA-161 / DSM 6008 / Z-2901)).